The following is a 337-amino-acid chain: Tryptophan--tRNA ligase (337 aa).

ATP-binding positions include 11–13 and 19–20; these read QPT and GN. The 'HIGH' region motif lies at 12–20; the sequence is PTGALHLGN. An L-tryptophan-binding site is contributed by Asp-135. ATP contacts are provided by residues 147 to 149, Val-191, and 200 to 204; these read GED and KMSKS. Residues 200–204 carry the 'KMSKS' region motif; that stretch reads KMSKS.

It belongs to the class-I aminoacyl-tRNA synthetase family. In terms of assembly, homodimer.

The protein localises to the cytoplasm. The catalysed reaction is tRNA(Trp) + L-tryptophan + ATP = L-tryptophyl-tRNA(Trp) + AMP + diphosphate + H(+). Catalyzes the attachment of tryptophan to tRNA(Trp). The sequence is that of Tryptophan--tRNA ligase from Parasynechococcus marenigrum (strain WH8102).